The chain runs to 227 residues: GRF-interacting factor 1 (227 aa).

The disordered stretch occupies residues 186–227 (RSGSGAKEGSTSLSVDVRGGTSSGAQSGDGEYLKVGTEEEGS).

The protein belongs to the SS18 family. Interacts with several GRFs. Interacts with GRF10. Interacts with GRF1. Expressed in shoots, aerial roots, ears and tassels. Expressed in the shoot apical meristem (SAM), young leaf primordia, leaf margins, inflorescence meristem, floral meristem and spikelet meristem.

Its function is as follows. Transcription coactivator that plays a role in the regulation of meristematic function in leaves, stems and inflorescences. Regulates shoot architecture and meristem determinacy. Binds to the inflorescence architecture gene UB3 (unbranched3). Regulates the expression of several genes involved in inflorescence architecture. Component of a network formed by the microRNA396 (miRNA396), the GRFs and their interacting factors (GIFs) acting in the regulation of meristem function, at least partially through the control of cell proliferation. Associates with the core SWI/SNF chromatin-remodeling complex and specific GRFs to tightly regulate the transition between cell division and cell expansion in growing leaves. The polypeptide is GRF-interacting factor 1 (Zea mays (Maize)).